A 652-amino-acid polypeptide reads, in one-letter code: Sodium-dependent phosphate transporter 2 (652 aa).

Residues 1-5 (MAMDE) lie on the Extracellular side of the membrane. Residues 6–26 (YLWMVILGFIIAFILAFSVGA) traverse the membrane as a helical segment. Topologically, residues 27–46 (NDVANSFGTAVGSGVVTLRQ) are cytoplasmic. Residues 47 to 67 (ACILASIFETTGSVLLGAKVG) traverse the membrane as a helical segment. Over 68–86 (ETIRKGIIDVNLYNETVET) the chain is Extracellular. The N-linked (GlcNAc...) asparagine glycan is linked to Asn81. Residues 87–107 (LMAGEVSAMVGSAVWQLIASF) form a helical membrane-spanning segment. The Cytoplasmic portion of the chain corresponds to 108-109 (LR). Residues 110-130 (LPISGTHCIVGSTIGFSLVAI) form a helical membrane-spanning segment. The Extracellular segment spans residues 131-142 (GTKGVQWMELVK). A helical membrane pass occupies residues 143-163 (IVASWFISPLLSGFMSGLLFV). The Cytoplasmic portion of the chain corresponds to 164-190 (LIRIFILKKEDPVPNGLRALPVFYAAT). The chain crosses the membrane as a helical span at residues 191–211 (IAINVFSIMYTGAPVLGLVLP). At 212–213 (MW) the chain is on the extracellular side. The chain crosses the membrane as a helical span at residues 214 to 234 (AIALISFGVALLFAFFVWLFV). At 235–482 (CPWMRRKITG…EEKEEKDAPE (248 aa)) the chain is on the cytoplasmic side. Phosphoserine is present on residues Ser253, Ser256, Ser259, and Ser268. A disordered region spans residues 273-307 (ELPGAKANDDSTIPLTGAAGETLGTSEGTSAGSHP). Positions 295–304 (LGTSEGTSAG) are enriched in polar residues. Ser316 and Ser385 each carry phosphoserine. Positions 458–477 (SELADPDQPREDPAEEEKEE) are disordered. The chain crosses the membrane as a helical span at residues 483 to 503 (VHLLFHFLQVLTACFGSFAHG). Over 504-530 (GNDVSNAIGPLVALWLIYKQGGVTQEA) the chain is Extracellular. Residues 531–551 (ATPVWLLFYGGVGICTGLWVW) form a helical membrane-spanning segment. Over 552–571 (GRRVIQTMGKDLTPITPSSG) the chain is Cytoplasmic. The chain crosses the membrane as a helical span at residues 572 to 586 (FTIELASAFTVVIAS). At 587 to 593 (NIGLPVS) the chain is on the extracellular side. A helical membrane pass occupies residues 594–609 (TTHCKVGSVVAVGWIR). Residues 610–621 (SRKAVDWRLFRN) lie on the Cytoplasmic side of the membrane. The helical transmembrane segment at 622–642 (IFVAWFVTVPVAGLFSAAVMA) threads the bilayer. Topologically, residues 643–652 (LLMYGILPYV) are extracellular.

Belongs to the inorganic phosphate transporter (PiT) (TC 2.A.20) family. Homodimer. In terms of tissue distribution, ubiquitously expressed.

The protein localises to the cell membrane. The protein resides in the apical cell membrane. It catalyses the reaction 2 Na(+)(out) + phosphate(out) = 2 Na(+)(in) + phosphate(in). In terms of biological role, sodium-phosphate symporter which preferentially transports the monovalent form of phosphate with a stoichiometry of two sodium ions per phosphate ion. Plays a critical role in the determination of bone quality and strength by providing phosphate for bone mineralization. Required to maintain normal cerebrospinal fluid phosphate levels. Mediates phosphate-induced calcification of vascular smooth muscle cells (VCMCs) and can functionally compensate for loss of SLC20A1 in VCMCs. Functionally, (Microbial infection) Functions as a retroviral receptor and confers human cells susceptibility to infection to amphotropic murine leukemia virus (A-MuLV), 10A1 murine leukemia virus (10A1 MLV) and some feline leukemia virus subgroup B (FeLV-B) variants. In Homo sapiens (Human), this protein is Sodium-dependent phosphate transporter 2 (SLC20A2).